Reading from the N-terminus, the 377-residue chain is RCC1 domain-containing protein 1 (377 aa).

The interval methionine 1–histidine 172 is interaction with KDM8. The stretch at histidine 6–arginine 57 is one RCC1 1 repeat. At arginine 144 the chain carries (3R)-3-hydroxyarginine. RCC1 repeat units follow at residues alanine 179 to glutamate 230, glycine 232 to glutamine 289, and threonine 319 to methionine 372.

Found in a complex with KDM8. Interacts (via N-terminus) with KDM8 (via N-terminus). In terms of processing, specifically hydroxylated (with R stereochemistry) at C-3 of ARG-141 by KDM8.

The protein resides in the chromosome. Plays a role in transcriptional repression of satellite repeats, possibly by regulating H3K36 methylation levels in centromeric regions together with KDM8. Possibly together with KDM8, is involved in proper mitotic spindle organization and chromosome segregation. Plays a role in regulating alpha-tubulin deacetylation and cytoskeletal microtubule stability, thereby promoting cell migration and TGF-beta-induced epithelial to mesenchymal transition (EMT), potentially through the inhibition of KDM8. The polypeptide is RCC1 domain-containing protein 1 (Rccd1) (Mus musculus (Mouse)).